We begin with the raw amino-acid sequence, 305 residues long: tRNA pseudouridine synthase B (305 aa).

Residue Asp39 is the Nucleophile of the active site.

The protein belongs to the pseudouridine synthase TruB family. Type 1 subfamily.

It catalyses the reaction uridine(55) in tRNA = pseudouridine(55) in tRNA. In terms of biological role, responsible for synthesis of pseudouridine from uracil-55 in the psi GC loop of transfer RNAs. This Staphylococcus haemolyticus (strain JCSC1435) protein is tRNA pseudouridine synthase B.